We begin with the raw amino-acid sequence, 283 residues long: ATP synthase gamma chain (283 aa).

Belongs to the ATPase gamma chain family. F-type ATPases have 2 components, CF(1) - the catalytic core - and CF(0) - the membrane proton channel. CF(1) has five subunits: alpha(3), beta(3), gamma(1), delta(1), epsilon(1). CF(0) has three main subunits: a, b and c.

Its subcellular location is the cell membrane. In terms of biological role, produces ATP from ADP in the presence of a proton gradient across the membrane. The gamma chain is believed to be important in regulating ATPase activity and the flow of protons through the CF(0) complex. The protein is ATP synthase gamma chain of Clostridium beijerinckii (strain ATCC 51743 / NCIMB 8052) (Clostridium acetobutylicum).